Reading from the N-terminus, the 315-residue chain is Melanocyte-stimulating hormone receptor (315 aa).

At 1 to 35 the chain is on the extracellular side; the sequence is MSTQEPQKSLLGSLNSNATSHLGLATNQSEPWCLY. 2 N-linked (GlcNAc...) asparagine glycosylation sites follow: asparagine 17 and asparagine 27. The chain crosses the membrane as a helical span at residues 36 to 61; it reads VSIPDGLFLSLGLVSLVENVLVVIAI. Residues 62 to 70 are Cytoplasmic-facing; that stretch reads TKNRNLHSP. A helical transmembrane segment spans residues 71-91; it reads MYYFICCLALSDLMVSVSIVL. Residues 92–116 lie on the Extracellular side of the membrane; the sequence is ETTIILLLEAGILVARVALVQQLDN. Residues 117 to 138 form a helical membrane-spanning segment; sequence LIDVLICGSMVSSLCFLGIIAI. At 139 to 161 the chain is on the cytoplasmic side; the sequence is DRYISIFYALRYHSIVTLPRARR. The chain crosses the membrane as a helical span at residues 162–181; sequence AVVGIWMVSIVSSTLFITYY. At 182 to 189 the chain is on the extracellular side; sequence KHTAVLLC. The chain crosses the membrane as a helical span at residues 190-209; it reads LVTFFLAMLALMAILYAHMF. The Cytoplasmic portion of the chain corresponds to 210 to 238; sequence TRACQHAQGIAQLHKRRRSIRQGFCLKGA. The helical transmembrane segment at 239–264 threads the bilayer; the sequence is ATLTILLGIFFLCWGPFFLHLLLIVL. At 265-277 the chain is on the extracellular side; that stretch reads CPQHPTCSCIFKN. Residues 278 to 298 traverse the membrane as a helical segment; it reads FNLFLLLIVLSSTVDPLIYAF. The Cytoplasmic segment spans residues 299–315; that stretch reads RSQELRMTLKEVLLCSW. Residue cysteine 313 is the site of S-palmitoyl cysteine attachment.

This sequence belongs to the G-protein coupled receptor 1 family. As to quaternary structure, interacts with MGRN1, but does not undergo MGRN1-mediated ubiquitination; this interaction competes with GNAS-binding and thus inhibits agonist-induced cAMP production. Interacts with OPN3; the interaction results in a decrease in MC1R-mediated cAMP signaling and ultimately a decrease in melanin production in melanocytes.

Its subcellular location is the cell membrane. Functionally, receptor for MSH (alpha, beta and gamma) and ACTH. The activity of this receptor is mediated by G proteins which activate adenylate cyclase. Mediates melanogenesis, the production of eumelanin (black/brown) and phaeomelanin (red/yellow), via regulation of cAMP signaling in melanocytes. The polypeptide is Melanocyte-stimulating hormone receptor (Mc1r) (Mus musculus (Mouse)).